Here is a 599-residue protein sequence, read N- to C-terminus: Potassium-transporting ATPase potassium-binding subunit (599 aa).

Helical transmembrane passes span 8-28, 61-81, 133-153, 176-196, 280-300, 311-331, 366-386, 391-411, 416-436, 456-476, 521-541, and 563-583; these read LLAL…IWLA, WQYA…VYAL, ALAV…FALF, AWLL…NGVI, LTNF…CFAF, WAVL…ITPA, INAS…AVIA, FTPL…VVFG, GLYG…LMIG, IAIL…VLAG, LLGL…LAIA, and LFVL…YVPA.

This sequence belongs to the KdpA family. As to quaternary structure, the system is composed of three essential subunits: KdpA, KdpB and KdpC.

The protein localises to the cell inner membrane. Its function is as follows. Part of the high-affinity ATP-driven potassium transport (or Kdp) system, which catalyzes the hydrolysis of ATP coupled with the electrogenic transport of potassium into the cytoplasm. This subunit binds the periplasmic potassium ions and delivers the ions to the membrane domain of KdpB through an intramembrane tunnel. This is Potassium-transporting ATPase potassium-binding subunit from Polaromonas naphthalenivorans (strain CJ2).